The following is a 201-amino-acid chain: Imidazole glycerol phosphate synthase subunit HisH (201 aa).

The 201-residue stretch at 1–201 (MVFIADYGAG…LQVLRNFAEC (201 aa)) folds into the Glutamine amidotransferase type-1 domain. Residue Cys-79 is the Nucleophile of the active site. Active-site residues include His-183 and Glu-185.

In terms of assembly, heterodimer of HisH and HisF.

It localises to the cytoplasm. It catalyses the reaction 5-[(5-phospho-1-deoxy-D-ribulos-1-ylimino)methylamino]-1-(5-phospho-beta-D-ribosyl)imidazole-4-carboxamide + L-glutamine = D-erythro-1-(imidazol-4-yl)glycerol 3-phosphate + 5-amino-1-(5-phospho-beta-D-ribosyl)imidazole-4-carboxamide + L-glutamate + H(+). The catalysed reaction is L-glutamine + H2O = L-glutamate + NH4(+). The protein operates within amino-acid biosynthesis; L-histidine biosynthesis; L-histidine from 5-phospho-alpha-D-ribose 1-diphosphate: step 5/9. Functionally, IGPS catalyzes the conversion of PRFAR and glutamine to IGP, AICAR and glutamate. The HisH subunit catalyzes the hydrolysis of glutamine to glutamate and ammonia as part of the synthesis of IGP and AICAR. The resulting ammonia molecule is channeled to the active site of HisF. The chain is Imidazole glycerol phosphate synthase subunit HisH from Chlorobium luteolum (strain DSM 273 / BCRC 81028 / 2530) (Pelodictyon luteolum).